A 106-amino-acid chain; its full sequence is Small ribosomal subunit protein uS10 (106 aa).

It belongs to the universal ribosomal protein uS10 family. Part of the 30S ribosomal subunit.

In terms of biological role, involved in the binding of tRNA to the ribosomes. The polypeptide is Small ribosomal subunit protein uS10 (Wolbachia sp. subsp. Drosophila simulans (strain wRi)).